Reading from the N-terminus, the 264-residue chain is Myozenin-2 (264 aa).

Arg53 bears the Omega-N-methylarginine mark. The tract at residues 98–134 (ESGSQQAPFTPPNTPDPRSPPNPENIAPGYSGPLKEI) is disordered. The residue at position 101 (Ser101) is a Phosphoserine. The segment covering 106–120 (FTPPNTPDPRSPPNP) has biased composition (pro residues). Residues Thr107 and Thr111 each carry the phosphothreonine modification. At Ser116 the chain carries Phosphoserine.

This sequence belongs to the myozenin family. Interacts via its C-terminus with spectrin repeats 3 and 4 of ACTN2. Interacts with ACTN1, LDB3, MYOT and PPP3CA.

Its subcellular location is the cytoplasm. The protein resides in the myofibril. It localises to the sarcomere. The protein localises to the z line. Myozenins may serve as intracellular binding proteins involved in linking Z line proteins such as alpha-actinin, gamma-filamin, TCAP/telethonin, LDB3/ZASP and localizing calcineurin signaling to the sarcomere. Plays an important role in the modulation of calcineurin signaling. May play a role in myofibrillogenesis. The polypeptide is Myozenin-2 (MYOZ2) (Bos taurus (Bovine)).